Here is a 130-residue protein sequence, read N- to C-terminus: Small ribosomal subunit protein uS9 (130 aa).

It belongs to the universal ribosomal protein uS9 family.

The polypeptide is Small ribosomal subunit protein uS9 (Mycoplasmoides gallisepticum (strain R(low / passage 15 / clone 2)) (Mycoplasma gallisepticum)).